Reading from the N-terminus, the 750-residue chain is Photosystem I P700 chlorophyll a apoprotein A1 (750 aa).

Transmembrane regions (helical) follow at residues 70-93, 156-179, 195-219, 291-309, 346-369, 385-411, 433-455, and 531-549; these read VFSA…FHGA, LYCT…FHYH, LNHH…HVSL, IAHH…GHMY, WHAQ…HHMY, LSLF…IFMV, AIIS…LYIH, and FLVH…LILL. The [4Fe-4S] cluster site is built by Cys-573 and Cys-582. The next 2 membrane-spanning stretches (helical) occupy residues 589–610 and 664–686; these read HVFL…HFSW and LSAY…MFLF. His-675 lines the chlorophyll a' pocket. Residues Met-683 and Tyr-691 each contribute to the chlorophyll a site. A phylloquinone-binding site is contributed by Trp-692. The helical transmembrane segment at 724-744 threads the bilayer; sequence TVGVTHYLLGGIATTWAFFLA.

The protein belongs to the PsaA/PsaB family. The PsaA/B heterodimer binds the P700 chlorophyll special pair and subsequent electron acceptors. PSI consists of a core antenna complex that captures photons, and an electron transfer chain that converts photonic excitation into a charge separation. The eukaryotic PSI reaction center is composed of at least 11 subunits. P700 is a chlorophyll a/chlorophyll a' dimer, A0 is one or more chlorophyll a, A1 is one or both phylloquinones and FX is a shared 4Fe-4S iron-sulfur center. is required as a cofactor.

It is found in the plastid. The protein resides in the chloroplast thylakoid membrane. It carries out the reaction reduced [plastocyanin] + hnu + oxidized [2Fe-2S]-[ferredoxin] = oxidized [plastocyanin] + reduced [2Fe-2S]-[ferredoxin]. Functionally, psaA and PsaB bind P700, the primary electron donor of photosystem I (PSI), as well as the electron acceptors A0, A1 and FX. PSI is a plastocyanin-ferredoxin oxidoreductase, converting photonic excitation into a charge separation, which transfers an electron from the donor P700 chlorophyll pair to the spectroscopically characterized acceptors A0, A1, FX, FA and FB in turn. Oxidized P700 is reduced on the lumenal side of the thylakoid membrane by plastocyanin. The polypeptide is Photosystem I P700 chlorophyll a apoprotein A1 (Oenothera elata subsp. hookeri (Hooker's evening primrose)).